We begin with the raw amino-acid sequence, 503 residues long: Galactose/methyl galactoside import ATP-binding protein MglA 2 (503 aa).

ABC transporter domains follow at residues 11–246 and 257–503; these read LEMT…VGRE and TPKE…SRYL. Position 43–50 (43–50) interacts with ATP; it reads GENGAGKS.

It belongs to the ABC transporter superfamily. Galactose/methyl galactoside importer (TC 3.A.1.2.3) family. In terms of assembly, the complex is composed of one ATP-binding protein (MglA), two transmembrane proteins (MglC) and a solute-binding protein (MglB).

The protein localises to the cell inner membrane. The catalysed reaction is D-galactose(out) + ATP + H2O = D-galactose(in) + ADP + phosphate + H(+). It catalyses the reaction methyl beta-D-galactoside(out) + ATP + H2O = methyl beta-D-galactoside(in) + ADP + phosphate + H(+). In terms of biological role, part of the ABC transporter complex MglABC involved in galactose/methyl galactoside import. Responsible for energy coupling to the transport system. The protein is Galactose/methyl galactoside import ATP-binding protein MglA 2 of Photobacterium profundum (strain SS9).